The chain runs to 674 residues: Tripartite terminase subunit 3 (674 aa).

The Walker A motif motif lies at 212–219 (VPRRHGKT). The Walker B motif motif lies at 305–310 (LLLVDE). Glutamate 310 serves as the catalytic For ATPase activity. Active-site for nuclease activity residues include aspartate 463 and glutamate 534. The required for interaction with UL56 and DNA packaging stretch occupies residues 580-600 (GRDKALAVEQFISRFNSGYIK). Aspartate 651 serves as the catalytic For nuclease activity.

This sequence belongs to the herpesviridae TRM3 protein family. Interacts with the terminase subunits TRM1 and TRM2. Interacts with portal protein.

It localises to the host nucleus. Component of the molecular motor that translocates viral genomic DNA in empty capsid during DNA packaging. Forms a tripartite terminase complex together with TRM1 and TRM2 in the host cytoplasm. Once the complex reaches the host nucleus, it interacts with the capsid portal vertex. This portal forms a ring in which genomic DNA is translocated into the capsid. TRM3 carries an RNase H-like nuclease activity that plays an important role for the cleavage of concatemeric viral DNA into unit length genomes. The polypeptide is Tripartite terminase subunit 3 (Homo sapiens (Human)).